Consider the following 81-residue polypeptide: Exodeoxyribonuclease 7 small subunit (81 aa).

Residues 60–70 (LVDKDGNEKAL) show a composition bias toward basic and acidic residues. The interval 60–81 (LVDKDGNEKALDPQNASAPEEE) is disordered.

It belongs to the XseB family. As to quaternary structure, heterooligomer composed of large and small subunits.

It is found in the cytoplasm. It carries out the reaction Exonucleolytic cleavage in either 5'- to 3'- or 3'- to 5'-direction to yield nucleoside 5'-phosphates.. In terms of biological role, bidirectionally degrades single-stranded DNA into large acid-insoluble oligonucleotides, which are then degraded further into small acid-soluble oligonucleotides. The sequence is that of Exodeoxyribonuclease 7 small subunit from Lactobacillus johnsonii (strain CNCM I-12250 / La1 / NCC 533).